A 474-amino-acid polypeptide reads, in one-letter code: Iroquois-class homeodomain protein irx-5 (474 aa).

The homeobox; TALE-type DNA-binding region spans aspartate 109–asparagine 171. Disordered stretches follow at residues threonine 174–glycine 222, glutamate 252–leucine 294, and serine 453–isoleucine 474. The segment covering glutamate 182–aspartate 199 has biased composition (acidic residues). The span at proline 263–glutamine 273 shows a compositional bias: pro residues.

Belongs to the TALE/IRO homeobox family. As to expression, early in gastrulation, expressed in cells beneath the blastopore lip. Subsequently expressed in the neural plate in overlapping patterns with other irx members, which all share an anterior border of expression. At the time of neural tube closure (stage 19) in regions of the midbrain, hindbrain, neural tube and optic vesicle, where expression continues during tailbud stages. In stage 34, expressed throughout the eye retina. Does not appear to be expressed in the developing heart or pronephros.

The protein resides in the nucleus. In terms of biological role, acts partially redundantly with other irx members in neural patterning. Required for formation of the posterior forebrain, midbrain, hindbrain, and to a lesser extent, spinal cord. Patterns the neuroectoderm in both the anterior/posterior and dorsal/ventral axes. Does not appear to play a role in pronephros kidney development. Involved in craniofacial and gonadal development. Modulates the migration of progenitor cell populations in branchial arches and gonads by repressing CXCL12. The polypeptide is Iroquois-class homeodomain protein irx-5 (irx5) (Xenopus laevis (African clawed frog)).